Reading from the N-terminus, the 1159-residue chain is Ferroxidase HEPHL1 (1159 aa).

An N-terminal signal peptide occupies residues 1-24 (MPRKQPAGCIFLLTFLGLSGLVGT). 6 consecutive Plastocyanin-like domains span residues 25-207 (VTRT…LLVC), 218-366 (TRND…VDNC), 379-561 (QRRY…LLVC), 571-719 (TQKG…VSSC), 731-907 (MIRT…LITC), and 915-1092 (KGRR…VPSN). At 25-1114 (VTRTYYIGIV…KNLGPTGAKA (1090 aa)) the chain is on the extracellular side. Histidine 127 and histidine 129 together coordinate Cu cation. Asparagine 161 carries an N-linked (GlcNAc...) asparagine glycan. Cysteine 181 and cysteine 207 are joined by a disulfide. The Cu cation site is built by histidine 187 and histidine 189. Asparagine 236 carries N-linked (GlcNAc...) asparagine glycosylation. Cysteine 285 and cysteine 366 form a disulfide bridge. 3 residues coordinate Cu cation: histidine 304, cysteine 347, and histidine 352. N-linked (GlcNAc...) asparagine glycosylation is present at asparagine 407. An intrachain disulfide couples cysteine 535 to cysteine 561. A glycan (N-linked (GlcNAc...) asparagine) is linked at asparagine 589. Cysteine 638 and cysteine 719 form a disulfide bridge. 4 residues coordinate Cu cation: histidine 657, cysteine 700, histidine 705, and methionine 710. Asparagine 772 carries N-linked (GlcNAc...) asparagine glycosylation. Cysteine 881 and cysteine 907 are joined by a disulfide. N-linked (GlcNAc...) asparagine glycosylation is present at asparagine 935. Cu cation is bound by residues histidine 1003, histidine 1006, histidine 1008, histidine 1048, cysteine 1049, histidine 1050, histidine 1054, and methionine 1059. The chain crosses the membrane as a helical span at residues 1115–1135 (ALVILFIIGLLLLITTVILSL). The Cytoplasmic portion of the chain corresponds to 1136 to 1159 (RLCSAMKQTDYQQVQSCALPTDAL).

Belongs to the multicopper oxidase family. Requires Cu cation as cofactor.

The protein resides in the membrane. It carries out the reaction 4 Fe(2+) + O2 + 4 H(+) = 4 Fe(3+) + 2 H2O. Functionally, is a copper-binding glycoprotein with ferroxidase activity. It oxidizes Fe(2+) to Fe(3+) without releasing radical oxygen species. May be involved in the regulation of intracellular iron content. In Homo sapiens (Human), this protein is Ferroxidase HEPHL1 (HEPHL1).